The chain runs to 121 residues: MIQQESYLTVADNSGAKRIQCIRVLGTNRRYAHVGDVIVAAVKDAAPNMGVKKSDVVKAVVVRTKATMRRETGNSIRFDDNAAVIINDDKNPKGTRVFGPVARELRERSFTKIVSLAPEVI.

The protein belongs to the universal ribosomal protein uL14 family. As to quaternary structure, part of the 50S ribosomal subunit. Forms a cluster with proteins L3 and L19. In the 70S ribosome, L14 and L19 interact and together make contacts with the 16S rRNA in bridges B5 and B8.

Functionally, binds to 23S rRNA. Forms part of two intersubunit bridges in the 70S ribosome. The sequence is that of Large ribosomal subunit protein uL14 from Synechococcus sp. (strain CC9605).